Here is a 647-residue protein sequence, read N- to C-terminus: Protein cueball (647 aa).

Residues 1–22 (MLWCPSVLVPLIAVAACLPVLA) form the signal peptide. Residues 23–534 (IGTPLEWEFA…CMTPSPWTSN (512 aa)) are Extracellular-facing. N-linked (GlcNAc...) asparagine glycans are attached at residues Asn80 and Asn106. LDL-receptor class B repeat units lie at residues 119–166 (RNLF…DVCR), 167–211 (RKLY…DQLS), and 212–257 (DRIF…TNDA). Asn175 is a glycosylation site (N-linked (GlcNAc...) asparagine). An N-linked (GlcNAc...) asparagine glycan is attached at Asn316. EGF-like domains are found at residues 365-401 (DEKTAQLERDHCLNGGTYIADRVLCICPTGFKGSRCE) and 436-473 (EISKCSGLCLNGGHCKLEDISEKPSCECPHNFAGERCE). Cystine bridges form between Cys376-Cys389, Cys391-Cys400, Cys440-Cys450, Cys444-Cys461, and Cys463-Cys472. The N-linked (GlcNAc...) asparagine glycan is linked to Asn475. Residues 535 to 555 (VIIVLVLGIVSCFFLVAVIVH) form a helical membrane-spanning segment. The Cytoplasmic segment spans residues 556 to 647 (GFRRLYKPKR…LIHNMDDDLY (92 aa)).

This sequence belongs to the cueball family.

Its subcellular location is the cell membrane. In terms of biological role, has a role in spermatogenesis and oogenesis. The protein is Protein cueball of Drosophila pseudoobscura pseudoobscura (Fruit fly).